Reading from the N-terminus, the 398-residue chain is Mitogen-activated protein kinase 1 (398 aa).

A disordered region spans residues Met-1–Ala-26. Residues Lys-67–Leu-352 form the Protein kinase domain. Residues Ile-73–Val-81 and Lys-96 each bind ATP. Asp-193 acts as the Proton acceptor in catalysis. A Phosphothreonine modification is found at Thr-225. A TXY motif is present at residues Thr-225 to Tyr-227. At Tyr-227 the chain carries Phosphotyrosine.

The protein belongs to the protein kinase superfamily. CMGC Ser/Thr protein kinase family. MAP kinase subfamily. As to quaternary structure, may interact with RAC1. In terms of processing, dually phosphorylated on Thr-225 and Tyr-227, which activates the enzyme.

It catalyses the reaction L-seryl-[protein] + ATP = O-phospho-L-seryl-[protein] + ADP + H(+). The catalysed reaction is L-threonyl-[protein] + ATP = O-phospho-L-threonyl-[protein] + ADP + H(+). Its activity is regulated as follows. Activated by threonine and tyrosine phosphorylation. Activated in response to sphingolipid elicitor (SE). Involved in sphingolipid elicitor (SE)-dependent defense signaling pathway. Acts downstream of heterotrimeric G protein alpha subunit and small GTPase RAC1. May regulate the expression of various genes involved in biotic and abiotic stress response. Involved in an abscisic acid signaling pathway that regulates the activities of antioxidant enzymes and the production of hydrogen peroxide. Acts downstream of CCAMK. In Oryza sativa subsp. japonica (Rice), this protein is Mitogen-activated protein kinase 1 (MPK1).